The chain runs to 188 residues: ATP-dependent protease subunit HslV (188 aa).

Threonine 14 is an active-site residue. 3 residues coordinate Na(+): alanine 173, cysteine 176, and threonine 179.

The protein belongs to the peptidase T1B family. HslV subfamily. In terms of assembly, a double ring-shaped homohexamer of HslV is capped on each side by a ring-shaped HslU homohexamer. The assembly of the HslU/HslV complex is dependent on binding of ATP.

It is found in the cytoplasm. The catalysed reaction is ATP-dependent cleavage of peptide bonds with broad specificity.. Allosterically activated by HslU binding. Functionally, protease subunit of a proteasome-like degradation complex believed to be a general protein degrading machinery. The polypeptide is ATP-dependent protease subunit HslV (Caulobacter vibrioides (strain ATCC 19089 / CIP 103742 / CB 15) (Caulobacter crescentus)).